A 332-amino-acid chain; its full sequence is Ethylene-responsive transcription factor ERF119 (332 aa).

Residues 1 to 33 (MAERKKRSSIQTNKPNKKPMKKKPFQLNHLPGL) form a disordered region. Over residues 15 to 24 (PNKKPMKKKP) the composition is skewed to basic residues. A DNA-binding region (AP2/ERF) is located at residues 130–187 (KPVGVRQRKWGKWAAEIRHPITKVRTWLGTYETLEQAADAYATKKLEFDALAAATSAA).

The protein belongs to the AP2/ERF transcription factor family. ERF subfamily.

It is found in the nucleus. In terms of biological role, probably acts as a transcriptional activator. Binds to the GCC-box pathogenesis-related promoter element. May be involved in the regulation of gene expression by stress factors and by components of stress signal transduction pathways. The polypeptide is Ethylene-responsive transcription factor ERF119 (ERF119) (Arabidopsis thaliana (Mouse-ear cress)).